The sequence spans 430 residues: Enolase (430 aa).

Gln167 contacts (2R)-2-phosphoglycerate. Glu209 functions as the Proton donor in the catalytic mechanism. Mg(2+)-binding residues include Asp245, Glu286, and Asp313. (2R)-2-phosphoglycerate contacts are provided by Lys338, Arg367, Ser368, and Lys389. Residue Lys338 is the Proton acceptor of the active site.

The protein belongs to the enolase family. The cofactor is Mg(2+).

Its subcellular location is the cytoplasm. The protein resides in the secreted. It localises to the cell surface. It catalyses the reaction (2R)-2-phosphoglycerate = phosphoenolpyruvate + H2O. Its pathway is carbohydrate degradation; glycolysis; pyruvate from D-glyceraldehyde 3-phosphate: step 4/5. Functionally, catalyzes the reversible conversion of 2-phosphoglycerate (2-PG) into phosphoenolpyruvate (PEP). It is essential for the degradation of carbohydrates via glycolysis. The sequence is that of Enolase from Synechococcus sp. (strain CC9311).